The primary structure comprises 492 residues: Putative transporter SVOPL (492 aa).

The next 10 membrane-spanning stretches (helical) occupy residues 48–68 (IALFLIMGSTGVVEAMEIMLI), 86–106 (VALVTTMVFFGYMVFSILFGL), 121–141 (FLWGAYFSLLTSFAPSYIWFV), 179–199 (VFWLAGSLLIIGLASVIIPTI), 203–223 (WLIRVASIPGIILIVAFKFIP), 281–301 (TLQIWVIWLGISFAYYGVILA), 348–368 (IISTIGEIALNPLNILGINFL), 383–403 (LFFLLLNICTSSAGLIGFLFM), 429–449 (ALGMGTSGSLCRIGAMVAPFI), and 458–478 (ILGALCLFSSVCVVCAISAFT).

Belongs to the major facilitator superfamily.

The protein resides in the membrane. The sequence is that of Putative transporter SVOPL (SVOPL) from Homo sapiens (Human).